We begin with the raw amino-acid sequence, 141 residues long: Large ribosomal subunit protein uL11 (141 aa).

The protein belongs to the universal ribosomal protein uL11 family. As to quaternary structure, part of the ribosomal stalk of the 50S ribosomal subunit. Interacts with L10 and the large rRNA to form the base of the stalk. L10 forms an elongated spine to which L12 dimers bind in a sequential fashion forming a multimeric L10(L12)X complex. Post-translationally, one or more lysine residues are methylated.

Functionally, forms part of the ribosomal stalk which helps the ribosome interact with GTP-bound translation factors. This Kosmotoga olearia (strain ATCC BAA-1733 / DSM 21960 / TBF 19.5.1) protein is Large ribosomal subunit protein uL11.